A 418-amino-acid polypeptide reads, in one-letter code: Probable mitochondrial adenine nucleotide transporter BTL2 (418 aa).

Solcar repeat units lie at residues 122-205, 215-300, and 329-414; these read MNTR…YRKQ, ATNF…LKSS, and LGPI…MKIV. Helical transmembrane passes span 127-147, 180-200, 221-241, 276-296, 335-355, and 383-403; these read HLWAGAVAAMVSKTFLAPLER, GNLLNVLRTAPFKAVNFCAYD, FVAGAAAGITATVLCLPLDTI, LVPSIASMALSGAVFYGVYDI, LMYGAIAGACTEVATYPFEVV, and IPALYAGLLPSLLQVLPSASI.

The protein belongs to the mitochondrial carrier (TC 2.A.29) family.

Its subcellular location is the mitochondrion inner membrane. Its function is as follows. Probable mitochondrial adenylate carrier that catalyzes the transport of ATP, ADP and AMP. The chain is Probable mitochondrial adenine nucleotide transporter BTL2 from Arabidopsis thaliana (Mouse-ear cress).